A 106-amino-acid polypeptide reads, in one-letter code: uncharacterized protein (106 aa).

The disordered stretch occupies residues 28–68; sequence SSANEPKKLPNKKLVSTKSHTQVNREKSKNKDTYEDYSDSN. Residues 50 to 61 show a composition bias toward basic and acidic residues; that stretch reads VNREKSKNKDTY.

This is an uncharacterized protein from Acanthamoeba polyphaga (Amoeba).